The primary structure comprises 351 residues: Dihydroorotate dehydrogenase (quinone) (351 aa).

Residues 65 to 69 (AGLDK) and T89 each bind FMN. K69 contacts substrate. Substrate is bound at residue 114-118 (NRLGF). FMN-binding residues include N150 and N183. N183 lines the substrate pocket. The active-site Nucleophile is the S186. A substrate-binding site is contributed by N188. FMN-binding residues include K228 and T256. 257-258 (NT) lines the substrate pocket. FMN contacts are provided by residues G279, G308, and 329–330 (YT).

It belongs to the dihydroorotate dehydrogenase family. Type 2 subfamily. In terms of assembly, monomer. It depends on FMN as a cofactor.

Its subcellular location is the cell membrane. The catalysed reaction is (S)-dihydroorotate + a quinone = orotate + a quinol. The protein operates within pyrimidine metabolism; UMP biosynthesis via de novo pathway; orotate from (S)-dihydroorotate (quinone route): step 1/1. Functionally, catalyzes the conversion of dihydroorotate to orotate with quinone as electron acceptor. The protein is Dihydroorotate dehydrogenase (quinone) of Acidovorax sp. (strain JS42).